A 114-amino-acid chain; its full sequence is UPF0342 protein PEPE_0673 (114 aa).

It belongs to the UPF0342 family.

In Pediococcus pentosaceus (strain ATCC 25745 / CCUG 21536 / LMG 10740 / 183-1w), this protein is UPF0342 protein PEPE_0673.